Here is a 319-residue protein sequence, read N- to C-terminus: Cobalamin biosynthesis protein CbiB (319 aa).

4 consecutive transmembrane segments (helical) span residues 56-76, 82-102, 153-173, and 296-316; these read VMWVVVVGVTWGVAWGVLALA, WFGWSVEVWMIFTTLAGRSLA, VDGIIAPLFFLFLGGAPLAMA, and LMWVASTLALALFIAARCGLS.

The protein belongs to the CobD/CbiB family.

The protein localises to the cell membrane. It functions in the pathway cofactor biosynthesis; adenosylcobalamin biosynthesis. Converts cobyric acid to cobinamide by the addition of aminopropanol on the F carboxylic group. However, the true cosubstrate could be (R)-1-amino-2-propanol O-2-phosphate, leading to cobinamide phosphate. The sequence is that of Cobalamin biosynthesis protein CbiB from Salmonella paratyphi A (strain ATCC 9150 / SARB42).